A 1462-amino-acid polypeptide reads, in one-letter code: Protein peg1 (1462 aa).

Disordered regions lie at residues 528-563 (SFSKSQKEETSSNSSNSSGTRRLGLPQRATPASRER) and 573-592 (FHSTSLPPSLPSGHSPSIAI). Composition is skewed to low complexity over residues 538–552 (SSNSSNSSGTRRLGL) and 574–589 (HSTSLPPSLPSGHSPS). Serine 599 carries the phosphoserine modification. The disordered stretch occupies residues 838–928 (SSTHQEHLSK…NCSEESLDDH (91 aa)). A compositionally biased stretch (low complexity) spans 847–866 (KNLPTLNTSSSSNSSQTDLL). Over residues 870 to 896 (GKGETKETEMQSPIESKEGLLSKDTHI) the composition is skewed to basic and acidic residues. Position 1221 is a phosphoserine (serine 1221). Positions 1342–1367 (TLIAEIADLQGLYEFTQQRLQSLNTE) form a coiled coil.

Belongs to the CLASP family. As to quaternary structure, interacts with microtubules. Interacts with dhc1, mal3 and tea1.

The protein resides in the cytoplasm. It localises to the cytoskeleton. The protein localises to the spindle. It is found in the microtubule organizing center. Its subcellular location is the spindle pole body. Its function is as follows. Microtubule binding protein that regulates the stability of dynamic microtubules. Required for mitotic spindle formation. In Schizosaccharomyces pombe (strain 972 / ATCC 24843) (Fission yeast), this protein is Protein peg1 (peg1).